The following is a 283-amino-acid chain: Acetylglutamate kinase (283 aa).

Substrate is bound by residues 63–64 (GG), Arg-85, and Asn-178.

This sequence belongs to the acetylglutamate kinase family. ArgB subfamily.

It localises to the cytoplasm. It catalyses the reaction N-acetyl-L-glutamate + ATP = N-acetyl-L-glutamyl 5-phosphate + ADP. The protein operates within amino-acid biosynthesis; L-arginine biosynthesis; N(2)-acetyl-L-ornithine from L-glutamate: step 2/4. Its function is as follows. Catalyzes the ATP-dependent phosphorylation of N-acetyl-L-glutamate. In Prochlorococcus marinus (strain MIT 9515), this protein is Acetylglutamate kinase.